Reading from the N-terminus, the 459-residue chain is Bifunctional protein GlmU (459 aa).

The interval 1–229 is pyrophosphorylase; that stretch reads MLTQEIIIVI…YEEILGINNK (229 aa). Residues 11 to 14, K25, Q76, 81 to 82, 103 to 105, G140, E154, and N227 contribute to the UDP-N-acetyl-alpha-D-glucosamine site; these read LAAG, GT, and YGD. D105 contacts Mg(2+). N227 provides a ligand contact to Mg(2+). The interval 230-250 is linker; the sequence is LQLSNLEKIFQKKQINKLLIN. The interval 251–459 is N-acetyltransferase; the sequence is GVTIKDPSHF…MRSKKIIKKN (209 aa). 2 residues coordinate UDP-N-acetyl-alpha-D-glucosamine: R333 and K351. H363 serves as the catalytic Proton acceptor. The UDP-N-acetyl-alpha-D-glucosamine site is built by Y366 and N377. Residues A380, 386 to 387, S405, and A423 each bind acetyl-CoA; that span reads NY.

The protein in the N-terminal section; belongs to the N-acetylglucosamine-1-phosphate uridyltransferase family. In the C-terminal section; belongs to the transferase hexapeptide repeat family. Homotrimer. Mg(2+) is required as a cofactor.

Its subcellular location is the cytoplasm. It catalyses the reaction alpha-D-glucosamine 1-phosphate + acetyl-CoA = N-acetyl-alpha-D-glucosamine 1-phosphate + CoA + H(+). It carries out the reaction N-acetyl-alpha-D-glucosamine 1-phosphate + UTP + H(+) = UDP-N-acetyl-alpha-D-glucosamine + diphosphate. The protein operates within nucleotide-sugar biosynthesis; UDP-N-acetyl-alpha-D-glucosamine biosynthesis; N-acetyl-alpha-D-glucosamine 1-phosphate from alpha-D-glucosamine 6-phosphate (route II): step 2/2. Its pathway is nucleotide-sugar biosynthesis; UDP-N-acetyl-alpha-D-glucosamine biosynthesis; UDP-N-acetyl-alpha-D-glucosamine from N-acetyl-alpha-D-glucosamine 1-phosphate: step 1/1. It participates in bacterial outer membrane biogenesis; LPS lipid A biosynthesis. In terms of biological role, catalyzes the last two sequential reactions in the de novo biosynthetic pathway for UDP-N-acetylglucosamine (UDP-GlcNAc). The C-terminal domain catalyzes the transfer of acetyl group from acetyl coenzyme A to glucosamine-1-phosphate (GlcN-1-P) to produce N-acetylglucosamine-1-phosphate (GlcNAc-1-P), which is converted into UDP-GlcNAc by the transfer of uridine 5-monophosphate (from uridine 5-triphosphate), a reaction catalyzed by the N-terminal domain. The polypeptide is Bifunctional protein GlmU (Buchnera aphidicola subsp. Acyrthosiphon pisum (strain 5A)).